The following is a 285-amino-acid chain: Baculoviral IAP repeat-containing protein 7 (285 aa).

Positions 18–47 (ESRARDSVRGPELSHREDGSGRTQEQDKPH) are disordered. Positions 19–47 (SRARDSVRGPELSHREDGSGRTQEQDKPH) are enriched in basic and acidic residues. A BIR repeat occupies 96–161 (RLASFYDWPS…RWFPRCQFLL (66 aa)). Positions 130, 133, 150, and 157 each coordinate Zn(2+). Residues 184-225 (QREEPEDAVSATPSAPAHGSPELLRSRRETQPEDVSEPGAKD) are disordered. An RING-type zinc finger spans residues 239-273 (CKVCLDRAVSIVFVPCGHFVCTECAPNLQLCPICR).

This sequence belongs to the IAP family. As to quaternary structure, binds to caspase-9. Interaction with DIABLO/SMAC via the BIR domain disrupts binding to caspase-9 and apoptotic suppressor activity. Interacts with TAB1. In vitro, interacts with caspase-3 and caspase-7 via its BIR domain. Post-translationally, autoubiquitinated and undergoes proteasome-mediated degradation. The truncated protein (tLivin) not only loses its anti-apoptotic effect but also acquires a pro-apoptotic effect.

Its subcellular location is the nucleus. The protein localises to the cytoplasm. It is found in the golgi apparatus. The catalysed reaction is S-ubiquitinyl-[E2 ubiquitin-conjugating enzyme]-L-cysteine + [acceptor protein]-L-lysine = [E2 ubiquitin-conjugating enzyme]-L-cysteine + N(6)-ubiquitinyl-[acceptor protein]-L-lysine.. Apoptotic regulator capable of exerting proapoptotic and anti-apoptotic activities and plays crucial roles in apoptosis, cell proliferation, and cell cycle control. Its anti-apoptotic activity is mediated through the inhibition of CASP3, CASP7 and CASP9, as well as by its E3 ubiquitin-protein ligase activity. As it is a weak caspase inhibitor, its anti-apoptotic activity is thought to be due to its ability to ubiquitinate DIABLO/SMAC targeting it for degradation thereby promoting cell survival. May contribute to caspase inhibition, by blocking the ability of DIABLO/SMAC to disrupt XIAP/BIRC4-caspase interactions. Protects against apoptosis induced by TNF or by chemical agents such as adriamycin, etoposide or staurosporine. Suppression of apoptosis is mediated by activation of MAPK8/JNK1, and possibly also of MAPK9/JNK2. This activation depends on TAB1 and MAP3K7/TAK1. In vitro, inhibits CASP3 and proteolytic activation of pro-CASP9. This is Baculoviral IAP repeat-containing protein 7 (Birc7) from Mus musculus (Mouse).